The sequence spans 265 residues: F-box only protein 6 (265 aa).

Positions 3-50 (LVSINQLPENILLEVFMHVPARQLLRNCRPVCCLWRDLIDLVSLWKRK) constitute an F-box domain. The FBA domain occupies 71–252 (FYFLCSLRRN…VTNSSVVISH (182 aa)). Residue S251 is modified to Phosphoserine.

In terms of assembly, part of a SCF (SKP1-cullin-F-box) protein ligase complex. Interacts with VCP, CHEK1 and CUL1.

It localises to the cytoplasm. The protein operates within protein modification; protein ubiquitination. Functionally, substrate-recognition component of some SCF (SKP1-CUL1-F-box protein)-type E3 ubiquitin ligase complexes. Involved in endoplasmic reticulum-associated degradation pathway (ERAD) for misfolded lumenal proteins by recognizing and binding sugar chains on unfolded glycoproteins that are retrotranslocated into the cytosol and promoting their ubiquitination and subsequent degradation. Able to recognize and bind denatured glycoproteins, which are modified with not only high-mannose but also complex-type oligosaccharides. Also recognizes sulfated glycans. Also involved in DNA damage response by specifically recognizing activated CHEK1 (phosphorylated on 'Ser-345'), promoting its ubiquitination and degradation. Ubiquitination of CHEK1 is required to ensure that activated CHEK1 does not accumulate as cells progress through S phase, or when replication forks encounter transient impediments during normal DNA replication. The polypeptide is F-box only protein 6 (FBXO6) (Bos taurus (Bovine)).